Here is a 131-residue protein sequence, read N- to C-terminus: Profilin (131 aa).

This sequence belongs to the profilin family. Occurs in many kinds of cells as a complex with monomeric actin in a 1:1 ratio.

It is found in the cytoplasm. It localises to the cytoskeleton. Binds to actin and affects the structure of the cytoskeleton. At high concentrations, profilin prevents the polymerization of actin, whereas it enhances it at low concentrations. By binding to PIP2, it inhibits the formation of IP3 and DG. The polypeptide is Profilin (Litchi chinensis (Lychee)).